The chain runs to 483 residues: Glutamyl-tRNA(Gln) amidotransferase subunit A (483 aa).

Catalysis depends on charge relay system residues Lys75 and Ser150. The active-site Acyl-ester intermediate is Ser174.

The protein belongs to the amidase family. GatA subfamily. Heterotrimer of A, B and C subunits.

It carries out the reaction L-glutamyl-tRNA(Gln) + L-glutamine + ATP + H2O = L-glutaminyl-tRNA(Gln) + L-glutamate + ADP + phosphate + H(+). Allows the formation of correctly charged Gln-tRNA(Gln) through the transamidation of misacylated Glu-tRNA(Gln) in organisms which lack glutaminyl-tRNA synthetase. The reaction takes place in the presence of glutamine and ATP through an activated gamma-phospho-Glu-tRNA(Gln). The chain is Glutamyl-tRNA(Gln) amidotransferase subunit A from Deinococcus geothermalis (strain DSM 11300 / CIP 105573 / AG-3a).